The chain runs to 545 residues: Metal transporter NRAT1 (545 aa).

A run of 12 helical transmembrane segments spans residues 51 to 71 (FLAH…PSNL), 84 to 104 (ELLW…TLAA), 128 to 148 (IFLW…EVLG), 155 to 175 (ILLK…TLLL), 188 to 208 (FIIA…LSYL), 234 to 254 (IALF…ALVL), 278 to 298 (LAFI…GSIC), 333 to 353 (VVYA…CTFA), 373 to 395 (LITR…PSGA), 398 to 418 (LIIL…IPLL), 437 to 457 (VVIA…FLVW), and 474 to 494 (GLIS…VVYL). Positions 516–545 (EAGGTPVVDASAADEDQPAPYRKDLADASM) are disordered. Positions 536–545 (YRKDLADASM) are enriched in basic and acidic residues.

The protein belongs to the NRAMP (TC 2.A.55) family. As to expression, expressed at low levels in roots.

Its subcellular location is the cell membrane. Metal transporter that transports the trivalent cation aluminum (Al(3+)), but does not seem to transport divalent cations such as iron (Fe(2+)), manganese (Mg(2+)) or Cadmium (Cd(2+)). Involved in Al tolerance by taking up Al in root cells, where it is detoxified by chelation with organic acid anions and sequestration into the vacuoles. In Oryza sativa subsp. japonica (Rice), this protein is Metal transporter NRAT1 (NRAT1).